Here is a 972-residue protein sequence, read N- to C-terminus: mRNA transport regulator MTR10 (972 aa).

The protein localises to the nucleus. Functionally, involved in mRNA transport from nucleus to cytoplasm. In Saccharomyces cerevisiae (strain ATCC 204508 / S288c) (Baker's yeast), this protein is mRNA transport regulator MTR10 (MTR10).